A 155-amino-acid polypeptide reads, in one-letter code: Large ribosomal subunit protein uL30 (155 aa).

Belongs to the universal ribosomal protein uL30 family. In terms of assembly, part of the 50S ribosomal subunit.

The chain is Large ribosomal subunit protein uL30 from Nitrosopumilus maritimus (strain SCM1).